The following is a 170-amino-acid chain: MPTKSIKIMVEGGNVKPGPPLAPTLSQLGLNVGEVVKKLNEATSSFKGMSVPVTIEVDSNTKKYEIKVGIPTTTALLLKEAGASEPSGDPAHKKIGNLSLEQVIKIVIMKKPGLTTKSLKAAVKSMLGTAKSIGVTVENKDPKELVKEVEEGKYDDLLAKYENEWNEVKE.

Belongs to the universal ribosomal protein uL11 family. As to quaternary structure, part of the ribosomal stalk of the 50S ribosomal subunit. Interacts with L10 and the large rRNA to form the base of the stalk. L10 forms an elongated spine to which L12 dimers bind in a sequential fashion forming a multimeric L10(L12)X complex.

Its function is as follows. Forms part of the ribosomal stalk which helps the ribosome interact with GTP-bound translation factors. The polypeptide is Large ribosomal subunit protein uL11 (Saccharolobus islandicus (strain Y.N.15.51 / Yellowstone #2) (Sulfolobus islandicus)).